Here is a 578-residue protein sequence, read N- to C-terminus: Dapdiamide synthesis protein DdaD (578 aa).

In terms of domain architecture, Carrier spans 498-573 (ESISATEHQI…KMAAWLDASS (76 aa)). Serine 533 bears the O-(pantetheine 4'-phosphoryl)serine mark.

Belongs to the ATP-dependent AMP-binding enzyme family. The cofactor is pantetheine 4'-phosphate.

It participates in antibiotic biosynthesis. Involved in dapdiamide antibiotics biosynthesis. Activates and sequesters N-beta-fumaramoyl-DAP as a covalently tethered thioester for subsequent oxidative modification of the fumaramoyl group. The polypeptide is Dapdiamide synthesis protein DdaD (Enterobacter agglomerans (Erwinia herbicola)).